A 149-amino-acid polypeptide reads, in one-letter code: Protein FAM72A (149 aa).

It belongs to the FAM72 family. Interacts with UNG. May be up-regulated in malignant colon cancers, compared to normal colon and colon adenomas. Expression is also elevated in other common cancer types, including breast, lung, uterus, and ovary.

The protein localises to the cytoplasm. Its subcellular location is the mitochondrion. Functionally, may play a role in the regulation of cellular reactive oxygen species metabolism. May participate in cell growth regulation. The sequence is that of Protein FAM72A (FAM72A) from Homo sapiens (Human).